The primary structure comprises 53 residues: Rho GTPase-activating protein 6 (53 aa).

It localises to the cytoplasm. In terms of biological role, GTPase activator for the Rho-type GTPases by converting them to an inactive GDP-bound state. Could regulate the interactions of signaling molecules with the actin cytoskeleton. Promotes continuous elongation of cytoplasmic processes during cell motility and simultaneous retraction of the cell body changing the cell morphology. In Takifugu rubripes (Japanese pufferfish), this protein is Rho GTPase-activating protein 6 (arhgap6).